The following is a 163-amino-acid chain: MKEGVAIYPGTFDPFTRGHEDLVRRASLLFNKVVVAVAESHGKAPIFTLAERVEIARDVLAPFPNVEVTGFDGLLMDFLRQRDARLILRGLRAVSDFEYEFQMAGMNRKLFPDVETVFLTPAEEYMFISATMVREIARLGGDVSKFVQPAVNERLLQKVSLKR.

Residue threonine 11 participates in substrate binding. ATP-binding positions include 11-12 and histidine 19; that span reads TF. Lysine 43, leucine 75, and arginine 89 together coordinate substrate. ATP is bound by residues 90–92, glutamate 100, and 125–131; these read GLR and YMFISAT.

The protein belongs to the bacterial CoaD family. Homohexamer. It depends on Mg(2+) as a cofactor.

It is found in the cytoplasm. It carries out the reaction (R)-4'-phosphopantetheine + ATP + H(+) = 3'-dephospho-CoA + diphosphate. Its pathway is cofactor biosynthesis; coenzyme A biosynthesis; CoA from (R)-pantothenate: step 4/5. In terms of biological role, reversibly transfers an adenylyl group from ATP to 4'-phosphopantetheine, yielding dephospho-CoA (dPCoA) and pyrophosphate. This Aromatoleum aromaticum (strain DSM 19018 / LMG 30748 / EbN1) (Azoarcus sp. (strain EbN1)) protein is Phosphopantetheine adenylyltransferase.